Here is a 368-residue protein sequence, read N- to C-terminus: MSLYPIYNFSAGPAVLPEAVLRTAQQEMSDYNGTGFSVMEMSHRSEMFLSILHHAEQDLRQLLKVPDNYKILFLQGGATTQFNMAAMNLAHGFRTADAVVTGNWSRIAYEQMSRLTDTEIRLAAHGGEQFDYLDLPPVETWDVAPDSAFVHFAVNETVNGLQYREVPRLSDGMPPLVCDMSSEILSREFDVADYGLIYAGAQKNIGPAGVTVVIVREDLLERCPNDIPDVFNYRSHLNRDGMYNTPSTYAIYMSGLVFRWLQAQGGVKKIEAVNRLKAQTLYETIDGSGGFYINDIHPDARSKMNVVFKTASEDLDRRFVLEAELQGLCLLKGYKSVGGMRASIYNAMPLEGVRALADFMRDFQRRYG.

L-glutamate is bound at residue Arg-44. Pyridoxal 5'-phosphate-binding positions include Ala-78–Thr-79, Trp-104, Thr-157, Asp-179, and Gln-202. Position 203 is an N6-(pyridoxal phosphate)lysine (Lys-203). Asn-244–Thr-245 serves as a coordination point for pyridoxal 5'-phosphate.

This sequence belongs to the class-V pyridoxal-phosphate-dependent aminotransferase family. SerC subfamily. As to quaternary structure, homodimer. Pyridoxal 5'-phosphate serves as cofactor.

It localises to the cytoplasm. It carries out the reaction O-phospho-L-serine + 2-oxoglutarate = 3-phosphooxypyruvate + L-glutamate. The catalysed reaction is 4-(phosphooxy)-L-threonine + 2-oxoglutarate = (R)-3-hydroxy-2-oxo-4-phosphooxybutanoate + L-glutamate. Its pathway is amino-acid biosynthesis; L-serine biosynthesis; L-serine from 3-phospho-D-glycerate: step 2/3. The protein operates within cofactor biosynthesis; pyridoxine 5'-phosphate biosynthesis; pyridoxine 5'-phosphate from D-erythrose 4-phosphate: step 3/5. In terms of biological role, catalyzes the reversible conversion of 3-phosphohydroxypyruvate to phosphoserine and of 3-hydroxy-2-oxo-4-phosphonooxybutanoate to phosphohydroxythreonine. This chain is Phosphoserine aminotransferase, found in Neisseria gonorrhoeae (strain ATCC 700825 / FA 1090).